Reading from the N-terminus, the 146-residue chain is Hemoglobin subunit beta (146 aa).

Residues 2-146 (QWTAEEKQLI…VAHALARKYH (145 aa)) enclose the Globin domain. Residues His63 and His92 each contribute to the heme b site.

Belongs to the globin family. Heterotetramer of two alpha chains and two beta chains. Red blood cells.

Functionally, involved in oxygen transport from the lung to the various peripheral tissues. The chain is Hemoglobin subunit beta (HBB) from Rhea americana (Greater rhea).